The chain runs to 439 residues: Tol-Pal system protein TolB (439 aa).

Positions 1–24 (MRNGMRKIIAGVFIFVFLISNLYA) are cleaved as a signal peptide.

Belongs to the TolB family. In terms of assembly, the Tol-Pal system is composed of five core proteins: the inner membrane proteins TolA, TolQ and TolR, the periplasmic protein TolB and the outer membrane protein Pal. They form a network linking the inner and outer membranes and the peptidoglycan layer.

It is found in the periplasm. Part of the Tol-Pal system, which plays a role in outer membrane invagination during cell division and is important for maintaining outer membrane integrity. This Francisella tularensis subsp. tularensis (strain FSC 198) protein is Tol-Pal system protein TolB.